A 154-amino-acid chain; its full sequence is Small ribosomal subunit protein eS10 (154 aa).

The tract at residues 91 to 154 (ATMKKQASRP…ERSAPAPQQN (64 aa)) is disordered. The span at 124-135 (RGDRRQGGDRRG) shows a compositional bias: basic and acidic residues.

The protein belongs to the eukaryotic ribosomal protein eS10 family.

Its subcellular location is the cytoplasm. The protein is Small ribosomal subunit protein eS10 (rps10) of Dictyostelium discoideum (Social amoeba).